The chain runs to 612 residues: Zinc metalloproteinase nas-36 (612 aa).

The first 16 residues, 1–16 (MLLLVLLFVFISATNA), serve as a signal peptide directing secretion. The N-linked (GlcNAc...) asparagine glycan is linked to Asn-15. Residues 17–122 (SDVGRRELEK…KSKPNVRGRR (106 aa)) constitute a propeptide that is removed on maturation. The Peptidase M12A domain maps to 123 to 320 (SFDASPESKW…IETINKAYCS (198 aa)). N-linked (GlcNAc...) asparagine glycosylation occurs at Asn-163. Cystine bridges form between Cys-166/Cys-319, Cys-190/Cys-209, Cys-329/Cys-343, Cys-345/Cys-354, Cys-365/Cys-394, Cys-515/Cys-546, Cys-519/Cys-551, and Cys-531/Cys-536. His-217 provides a ligand contact to Zn(2+). Residue Glu-218 is part of the active site. Zn(2+)-binding residues include His-221 and His-227. The EGF-like domain maps to 320-355 (SDRCSGSNDCKNGGYPHPKQCDTCLCPNGLSGPKCE). The 114-residue stretch at 365–478 (CGGKIVVKEE…VGFKLQARAT (114 aa)) folds into the CUB domain. A TSP type-1 domain is found at 503–552 (TDQWAEWGSWSQCSRSCGGCGIMSRVRVCRTKQCKGRRQEFSTCNLKACP).

Zn(2+) serves as cofactor.

It is found in the secreted. Its activity is regulated as follows. Inhibited by 1,10-phenanthroline. Its function is as follows. Metalloprotease. Involved in molting, a process during larval stages in which a new cuticle is formed and the old cuticle is shed. This Haemonchus contortus (Barber pole worm) protein is Zinc metalloproteinase nas-36.